The chain runs to 71 residues: Ceratotoxin-D (71 aa).

The first 23 residues, 1–23 (MANLKAVFLICILAFIAFHCVVG), serve as a signal peptide directing secretion. The propeptide occupies 24–35 (APTAEDSIVVKR).

In terms of assembly, homomer of four to six subunits.

Its subcellular location is the secreted. Its function is as follows. Female-specific peptides with potent activity against Gram-positive and Gram-negative bacteria. They have as well hemolytic activity. The polypeptide is Ceratotoxin-D (CTXD) (Ceratitis capitata (Mediterranean fruit fly)).